The following is a 240-amino-acid chain: Uridylate kinase (240 aa).

ATP is bound at residue lysine 13–glycine 16. Residues glycine 21–glycine 26 are involved in allosteric activation by GTP. Glycine 55 lines the UMP pocket. 2 residues coordinate ATP: glycine 56 and arginine 60. Residues aspartate 75 and isoleucine 136–threonine 143 contribute to the UMP site. ATP is bound by residues asparagine 164, tyrosine 170, and aspartate 173.

This sequence belongs to the UMP kinase family. As to quaternary structure, homohexamer.

It is found in the cytoplasm. It catalyses the reaction UMP + ATP = UDP + ADP. Its pathway is pyrimidine metabolism; CTP biosynthesis via de novo pathway; UDP from UMP (UMPK route): step 1/1. With respect to regulation, allosterically activated by GTP. Inhibited by UTP. Its function is as follows. Catalyzes the reversible phosphorylation of UMP to UDP. This is Uridylate kinase from Staphylococcus epidermidis (strain ATCC 35984 / DSM 28319 / BCRC 17069 / CCUG 31568 / BM 3577 / RP62A).